The primary structure comprises 235 residues: Phosphoribosylaminoimidazole-succinocarboxamide synthase (235 aa).

Belongs to the SAICAR synthetase family.

It catalyses the reaction 5-amino-1-(5-phospho-D-ribosyl)imidazole-4-carboxylate + L-aspartate + ATP = (2S)-2-[5-amino-1-(5-phospho-beta-D-ribosyl)imidazole-4-carboxamido]succinate + ADP + phosphate + 2 H(+). Its pathway is purine metabolism; IMP biosynthesis via de novo pathway; 5-amino-1-(5-phospho-D-ribosyl)imidazole-4-carboxamide from 5-amino-1-(5-phospho-D-ribosyl)imidazole-4-carboxylate: step 1/2. This Streptococcus mutans serotype c (strain ATCC 700610 / UA159) protein is Phosphoribosylaminoimidazole-succinocarboxamide synthase.